We begin with the raw amino-acid sequence, 139 residues long: Bilirubin-inducible fluorescent protein UnaG (139 aa).

(4Z,15Z)-bilirubin IXalpha is bound by residues Asn57, Thr61, Ser80, Arg112, and 132–134 (RSY).

This sequence belongs to the calycin superfamily. Fatty-acid binding protein (FABP) family. As to quaternary structure, monomer. Detected in small-diameter muscle fibers from the white muscle layer from juvenile animals (glass eels) (at protein level). Detected in small-diameter muscle fibers from juvenile animals (glass eels).

Its subcellular location is the cytoplasm. In terms of biological role, beta-barrel protein that binds unconjugated bilirubin with high affinity. Excitation of the bilirubin-bound protein gives rise to green fluorescence, both under normoxia and hypoxia. The apoprotein is not fluorescent. Does not emit fluorescence in the presence of ditauro-bilirubin, urobilin or biliverdin. The polypeptide is Bilirubin-inducible fluorescent protein UnaG (Anguilla japonica (Japanese eel)).